Reading from the N-terminus, the 455-residue chain is Serine--tRNA ligase (455 aa).

252 to 254 (TSE) contacts L-serine. ATP contacts are provided by residues 283–285 (RKE) and V299. E306 is an L-serine binding site. Position 370–373 (370–373 (EVVS)) interacts with ATP. T406 is a binding site for L-serine.

Belongs to the class-II aminoacyl-tRNA synthetase family. Type-1 seryl-tRNA synthetase subfamily. Homodimer. The tRNA molecule binds across the dimer.

It is found in the cytoplasm. It carries out the reaction tRNA(Ser) + L-serine + ATP = L-seryl-tRNA(Ser) + AMP + diphosphate + H(+). The enzyme catalyses tRNA(Sec) + L-serine + ATP = L-seryl-tRNA(Sec) + AMP + diphosphate + H(+). Its pathway is aminoacyl-tRNA biosynthesis; selenocysteinyl-tRNA(Sec) biosynthesis; L-seryl-tRNA(Sec) from L-serine and tRNA(Sec): step 1/1. Functionally, catalyzes the attachment of serine to tRNA(Ser). Is also able to aminoacylate tRNA(Sec) with serine, to form the misacylated tRNA L-seryl-tRNA(Sec), which will be further converted into selenocysteinyl-tRNA(Sec). The protein is Serine--tRNA ligase of Thermococcus sibiricus (strain DSM 12597 / MM 739).